We begin with the raw amino-acid sequence, 76 residues long: Repressor protein of division inhibition gene dicB (76 aa).

The DNA-binding element occupies 13–33; the sequence is KTKLAQAAGIRLASLYSWKGD.

Functionally, this protein is a repressor of division inhibition gene dicB. This is Repressor protein of division inhibition gene dicB (dicC) from Escherichia coli (strain K12).